The chain runs to 448 residues: UDP-N-acetylmuramoylalanine--D-glutamate ligase (448 aa).

Gly116–Thr122 contributes to the ATP binding site.

The protein belongs to the MurCDEF family.

The protein localises to the cytoplasm. It catalyses the reaction UDP-N-acetyl-alpha-D-muramoyl-L-alanine + D-glutamate + ATP = UDP-N-acetyl-alpha-D-muramoyl-L-alanyl-D-glutamate + ADP + phosphate + H(+). Its pathway is cell wall biogenesis; peptidoglycan biosynthesis. Functionally, cell wall formation. Catalyzes the addition of glutamate to the nucleotide precursor UDP-N-acetylmuramoyl-L-alanine (UMA). The protein is UDP-N-acetylmuramoylalanine--D-glutamate ligase of Pseudomonas fluorescens (strain ATCC BAA-477 / NRRL B-23932 / Pf-5).